Here is a 303-residue protein sequence, read N- to C-terminus: Recombination-associated protein RdgC (303 aa).

The protein belongs to the RdgC family.

Its subcellular location is the cytoplasm. It localises to the nucleoid. May be involved in recombination. In Pseudoalteromonas translucida (strain TAC 125), this protein is Recombination-associated protein RdgC.